Here is a 265-residue protein sequence, read N- to C-terminus: tRNA(His) guanylyltransferase (265 aa).

D29, G30, and D76 together coordinate Mg(2+). Residues D29 to H34 and S75 to D76 each bind GTP.

Belongs to the tRNA(His) guanylyltransferase family. Requires Mg(2+) as cofactor.

The catalysed reaction is a 5'-end ribonucleotide-tRNA(His) + GTP + ATP + H2O = a 5'-end phospho-guanosine-ribonucleotide-tRNA(His) + AMP + 2 diphosphate + H(+). Functionally, adds a GMP to the 5'-end of tRNA(His) after transcription and RNase P cleavage. This Debaryomyces hansenii (strain ATCC 36239 / CBS 767 / BCRC 21394 / JCM 1990 / NBRC 0083 / IGC 2968) (Yeast) protein is tRNA(His) guanylyltransferase (THG1).